The chain runs to 85 residues: MMAVKKSRKRTAATELKKPRRNQLEALGVTTIDYKDVAVLRTFLSERGKIRSRHVTGLTPQQQRQVATAIKNAREMALLPMAGPR.

It belongs to the bacterial ribosomal protein bS18 family. Part of the 30S ribosomal subunit. Forms a tight heterodimer with protein bS6.

Functionally, binds as a heterodimer with protein bS6 to the central domain of the 16S rRNA, where it helps stabilize the platform of the 30S subunit. The sequence is that of Small ribosomal subunit protein bS18A from Mycolicibacterium smegmatis (strain ATCC 700084 / mc(2)155) (Mycobacterium smegmatis).